The following is a 56-amino-acid chain: Large ribosomal subunit protein bL32 (56 aa).

A disordered region spans residues 1–37 (MAVQQNKKSRSKRGMRRSHDALSTAQLSVDATSGELH). Over residues 7–16 (KKSRSKRGMR) the composition is skewed to basic residues. Positions 21 to 31 (ALSTAQLSVDA) are enriched in polar residues.

This sequence belongs to the bacterial ribosomal protein bL32 family.

The sequence is that of Large ribosomal subunit protein bL32 from Shewanella loihica (strain ATCC BAA-1088 / PV-4).